The sequence spans 417 residues: Serine hydroxymethyltransferase (417 aa).

Residues L121 and 125–127 (GHL) contribute to the (6S)-5,6,7,8-tetrahydrofolate site. K229 is subject to N6-(pyridoxal phosphate)lysine. 355-357 (SPF) provides a ligand contact to (6S)-5,6,7,8-tetrahydrofolate.

It belongs to the SHMT family. In terms of assembly, homodimer. Requires pyridoxal 5'-phosphate as cofactor.

It is found in the cytoplasm. It carries out the reaction (6R)-5,10-methylene-5,6,7,8-tetrahydrofolate + glycine + H2O = (6S)-5,6,7,8-tetrahydrofolate + L-serine. The protein operates within one-carbon metabolism; tetrahydrofolate interconversion. It participates in amino-acid biosynthesis; glycine biosynthesis; glycine from L-serine: step 1/1. Catalyzes the reversible interconversion of serine and glycine with tetrahydrofolate (THF) serving as the one-carbon carrier. This reaction serves as the major source of one-carbon groups required for the biosynthesis of purines, thymidylate, methionine, and other important biomolecules. Also exhibits THF-independent aldolase activity toward beta-hydroxyamino acids, producing glycine and aldehydes, via a retro-aldol mechanism. In Stenotrophomonas maltophilia (strain R551-3), this protein is Serine hydroxymethyltransferase.